Here is a 151-residue protein sequence, read N- to C-terminus: Small ribosomal subunit protein uS15 (151 aa).

Belongs to the universal ribosomal protein uS15 family. Component of the small ribosomal subunit. Part of the small subunit (SSU) processome, composed of more than 70 proteins and the RNA chaperone small nucleolar RNA (snoRNA) U3.

The protein resides in the cytoplasm. It localises to the nucleus. The protein localises to the nucleolus. In terms of biological role, component of the small ribosomal subunit. The ribosome is a large ribonucleoprotein complex responsible for the synthesis of proteins in the cell. Part of the small subunit (SSU) processome, first precursor of the small eukaryotic ribosomal subunit. During the assembly of the SSU processome in the nucleolus, many ribosome biogenesis factors, an RNA chaperone and ribosomal proteins associate with the nascent pre-rRNA and work in concert to generate RNA folding, modifications, rearrangements and cleavage as well as targeted degradation of pre-ribosomal RNA by the RNA exosome. The sequence is that of Small ribosomal subunit protein uS15 (rps-13) from Caenorhabditis elegans.